Here is a 233-residue protein sequence, read N- to C-terminus: Large ribosomal subunit protein uL1 (233 aa).

This sequence belongs to the universal ribosomal protein uL1 family. Part of the 50S ribosomal subunit.

Functionally, binds directly to 23S rRNA. The L1 stalk is quite mobile in the ribosome, and is involved in E site tRNA release. In terms of biological role, protein L1 is also a translational repressor protein, it controls the translation of the L11 operon by binding to its mRNA. The sequence is that of Large ribosomal subunit protein uL1 from Proteus vulgaris.